We begin with the raw amino-acid sequence, 78 residues long: Longicornsin (78 aa).

The first 22 residues, 1 to 22 (MAESTTTCFLLLVTGYVTAVMS), serve as a signal peptide directing secretion. Positions 23–29 (EEAHLRS) are excised as a propeptide. 3 disulfides stabilise this stretch: C35–C58, C43–C63, and C47–C65.

As to expression, salivary glands (at protein level).

The protein resides in the secreted. Its function is as follows. Has antibacterial activity against the Gram-positive bacteria S.aureus ATCC2592 (MIC=0.8 ug/ml), S.aureus 6A (MIC=0.8 ug/ml) and S.aureus 15A (MIC=1.6 ug/ml), and against the Gram-negative bacteria E.coli ATCC 25922 (MIC=3.2 ug/ml), E.coli 23A (MIC=6.4 ug/ml), E.coli 27A (MIC=6.4 ug/ml), P.aeruginosa 3A (MIC=3.2 ug/ml), P.aeruginosa 7A (MIC=0.8 ug/ml) and H.pylori NCTC11637 (MIC=6.4 ug/ml). Has antifungal activity against C.albidus ATCC2002 (MIC=25.6 ug/ml). Very low hemolytic activity against rabbit erythrocytes. This is Longicornsin from Haemaphysalis longicornis (Bush tick).